A 362-amino-acid chain; its full sequence is Chorismate synthase (362 aa).

Positions 48 and 54 each coordinate NADP(+). Residues 131–133, 243–244, Gly-287, 302–306, and Arg-328 each bind FMN; these read RSS, NA, and KPTSS.

This sequence belongs to the chorismate synthase family. As to quaternary structure, homotetramer. The cofactor is FMNH2.

The enzyme catalyses 5-O-(1-carboxyvinyl)-3-phosphoshikimate = chorismate + phosphate. The protein operates within metabolic intermediate biosynthesis; chorismate biosynthesis; chorismate from D-erythrose 4-phosphate and phosphoenolpyruvate: step 7/7. Its function is as follows. Catalyzes the anti-1,4-elimination of the C-3 phosphate and the C-6 proR hydrogen from 5-enolpyruvylshikimate-3-phosphate (EPSP) to yield chorismate, which is the branch point compound that serves as the starting substrate for the three terminal pathways of aromatic amino acid biosynthesis. This reaction introduces a second double bond into the aromatic ring system. This Rhodopseudomonas palustris (strain TIE-1) protein is Chorismate synthase.